Reading from the N-terminus, the 146-residue chain is MIF-like protein mif-3 (146 aa).

This sequence belongs to the MIF family.

The polypeptide is MIF-like protein mif-3 (mif-3) (Caenorhabditis elegans).